Reading from the N-terminus, the 156-residue chain is 3-hydroxyacyl-[acyl-carrier-protein] dehydratase FabZ (156 aa).

The active site involves H54.

Belongs to the thioester dehydratase family. FabZ subfamily.

The protein localises to the cytoplasm. The catalysed reaction is a (3R)-hydroxyacyl-[ACP] = a (2E)-enoyl-[ACP] + H2O. Involved in unsaturated fatty acids biosynthesis. Catalyzes the dehydration of short chain beta-hydroxyacyl-ACPs and long chain saturated and unsaturated beta-hydroxyacyl-ACPs. The protein is 3-hydroxyacyl-[acyl-carrier-protein] dehydratase FabZ of Koribacter versatilis (strain Ellin345).